We begin with the raw amino-acid sequence, 126 residues long: uncharacterized protein (126 aa).

The disordered stretch occupies residues 1–101 (MQASSEPANV…KSVGSQSADE (101 aa)). Composition is skewed to polar residues over residues 14-27 (GQNQSSEGQLSTSP) and 86-99 (DTEALQKSVGSQSA).

This is an uncharacterized protein from Schizosaccharomyces pombe (strain 972 / ATCC 24843) (Fission yeast).